The following is a 415-amino-acid chain: Multidrug resistance protein MdtA (415 aa).

The signal sequence occupies residues 1 to 21; that stretch reads MKGSYKSRWVIVIVVVIAAIA. Positions 31–47 are enriched in polar residues; sequence DSQSAAPGATKQAQQSP. Disordered stretches follow at residues 31–56 and 390–415; these read DSQS…GMRA and VVET…GARS. Positions 399–415 are enriched in basic and acidic residues; the sequence is PEEKATSREYAKKGARS.

It belongs to the membrane fusion protein (MFP) (TC 8.A.1) family. In terms of assembly, part of a tripartite efflux system composed of MdtA, MdtB and MdtC.

The protein resides in the cell inner membrane. In terms of biological role, the MdtABC tripartite complex confers resistance against novobiocin and deoxycholate. This Escherichia coli O6:H1 (strain CFT073 / ATCC 700928 / UPEC) protein is Multidrug resistance protein MdtA.